The primary structure comprises 314 residues: Olfactory receptor 5B12 (314 aa).

Topologically, residues 1-23 are extracellular; that stretch reads MENNTEVTEFILVGLTDDPELQI. A glycan (N-linked (GlcNAc...) asparagine) is linked at asparagine 3. The chain crosses the membrane as a helical span at residues 24-44; sequence PLFIVFLFIYLITLVGNLGMI. Over 45–52 the chain is Cytoplasmic; sequence ELILLDSC. The helical transmembrane segment at 53–73 threads the bilayer; that stretch reads LHTPMYFFLSNLSLVDFGYSS. Over 74–97 the chain is Extracellular; it reads AVTPKVMVGFLTGDKFILYNACAT. An intrachain disulfide couples cysteine 95 to cysteine 187. Residues 98-118 form a helical membrane-spanning segment; that stretch reads QFFFFVAFITAESFLLASMAY. Topologically, residues 119–137 are cytoplasmic; sequence DRYAALCKPLHYTTTMTTN. Residues 138–158 traverse the membrane as a helical segment; that stretch reads VCACLAIGSYICGFLNASIHT. Residues 159–194 lie on the Extracellular side of the membrane; the sequence is GNTFRLSFCRSNVVEHFFCDAPPLLTLSCSDNYISE. A helical transmembrane segment spans residues 195 to 215; that stretch reads MVIFFVVGFNDLFSILVILIS. Residues 216-235 are Cytoplasmic-facing; that stretch reads YLFIFITIMKMRSPEGRQKA. The helical transmembrane segment at 236–256 threads the bilayer; it reads FSTCASHLTAVSIFYGTGIFM. At 257-269 the chain is on the extracellular side; it reads YLRPNSSHFMGTD. The N-linked (GlcNAc...) asparagine glycan is linked to asparagine 261. A helical membrane pass occupies residues 270–290; sequence KMASVFYAIVIPMLNPLVYSL. Residues 291-314 are Cytoplasmic-facing; that stretch reads RNKEVKSAFKKTVGKAKASIGFIF.

The protein belongs to the G-protein coupled receptor 1 family.

It is found in the cell membrane. In terms of biological role, odorant receptor. This chain is Olfactory receptor 5B12 (OR5B12), found in Homo sapiens (Human).